A 635-amino-acid chain; its full sequence is Threonine--tRNA ligase (635 aa).

The region spanning 1–61 (MTVVRLPDGT…EIDSDLVLIT (61 aa)) is the TGS domain. Residues 242-533 (DHRKLGKQLD…LIEHHAGALP (292 aa)) are catalytic. Residues Cys333, His384, and His510 each contribute to the Zn(2+) site.

This sequence belongs to the class-II aminoacyl-tRNA synthetase family. As to quaternary structure, homodimer. Zn(2+) serves as cofactor.

The protein resides in the cytoplasm. The enzyme catalyses tRNA(Thr) + L-threonine + ATP = L-threonyl-tRNA(Thr) + AMP + diphosphate + H(+). Functionally, catalyzes the attachment of threonine to tRNA(Thr) in a two-step reaction: L-threonine is first activated by ATP to form Thr-AMP and then transferred to the acceptor end of tRNA(Thr). Also edits incorrectly charged L-seryl-tRNA(Thr). This Nitrosomonas eutropha (strain DSM 101675 / C91 / Nm57) protein is Threonine--tRNA ligase.